Reading from the N-terminus, the 522-residue chain is BTB/POZ domain-containing protein 3 (522 aa).

Positions 25 to 44 (RSKKSSKKANTSSSSSNSSK) are disordered. Positions 32-44 (KANTSSSSSNSSK) are enriched in low complexity. Positions 120 to 190 (ADVHFVVGPP…IYCDEIDLAA (71 aa)) constitute a BTB domain. Residues 235–300 (FEEPDLTQRC…NWAEVECQRQ (66 aa)) enclose the BACK domain.

It localises to the cytoplasm. It is found in the cytosol. The protein resides in the nucleus. Functionally, acts as a key regulator of dendritic field orientation during development of sensory cortex. Also directs dendrites toward active axon terminals when ectopically expressed. The protein is BTB/POZ domain-containing protein 3 (BTBD3) of Homo sapiens (Human).